Consider the following 834-residue polypeptide: DIS3-like exonuclease 2 (834 aa).

Over residues M1–L23 the composition is skewed to polar residues. Residues M1–S35 form a disordered region. Mg(2+) is bound by residues D354 and D363.

This sequence belongs to the RNR ribonuclease family. DIS3L2 subfamily. Mg(2+) serves as cofactor. The cofactor is Mn(2+).

It is found in the cytoplasm. The protein resides in the P-body. In terms of biological role, 3'-5'-exoribonuclease that specifically recognizes RNAs polyuridylated at their 3' end and mediates their degradation. Component of an exosome-independent RNA degradation pathway that mediates degradation of both mRNAs and miRNAs that have been polyuridylated by a terminal uridylyltransferase. Essential for correct mitosis, and negatively regulates cell proliferation. This is DIS3-like exonuclease 2 from Xenopus tropicalis (Western clawed frog).